The chain runs to 81 residues: ATP synthase subunit C, cyanelle (81 aa).

2 helical membrane passes run 7–27 (AASV…PGIG) and 57–77 (LAFM…LLFA).

It belongs to the ATPase C chain family. F-type ATPases have 2 components, F(1) - the catalytic core - and F(0) - the membrane proton channel. F(1) has five subunits: alpha(3), beta(3), gamma(1), delta(1), epsilon(1). F(0) has four main subunits: a(1), b(1), b'(1) and c(10-14). The alpha and beta chains form an alternating ring which encloses part of the gamma chain. F(1) is attached to F(0) by a central stalk formed by the gamma and epsilon chains, while a peripheral stalk is formed by the delta, b and b' chains.

It is found in the plastid. The protein resides in the cyanelle thylakoid membrane. In terms of biological role, f(1)F(0) ATP synthase produces ATP from ADP in the presence of a proton or sodium gradient. F-type ATPases consist of two structural domains, F(1) containing the extramembraneous catalytic core and F(0) containing the membrane proton channel, linked together by a central stalk and a peripheral stalk. During catalysis, ATP synthesis in the catalytic domain of F(1) is coupled via a rotary mechanism of the central stalk subunits to proton translocation. Functionally, key component of the F(0) channel; it plays a direct role in translocation across the membrane. A homomeric c-ring of between 10-14 subunits forms the central stalk rotor element with the F(1) delta and epsilon subunits. This Cyanophora paradoxa protein is ATP synthase subunit C, cyanelle.